Reading from the N-terminus, the 1273-residue chain is Ribulose bisphosphate carboxylase small subunit, chloroplastic (1273 aa).

The N-terminal 134 residues, 1-134, are a transit peptide targeting the chloroplast; that stretch reads MPFDRQPLLS…AVLPFTSEKD (134 aa). Propeptides lie at residues 269-278, 412-421, 556-565, 699-708, 844-853, 987-996, and 1131-1140; these read GMAAMTGEKD and GMAAMTGEKE.

The protein belongs to the RuBisCO small chain family. As to quaternary structure, heterohexadecamer of 8 large and 8 small subunits. In terms of processing, eight small subunits are processed from a large polyprotein. All start with the same sequence but there is more heterogeneity at the C-terminus.

The protein resides in the plastid. Its subcellular location is the chloroplast. Functionally, ruBisCO catalyzes two reactions: the carboxylation of D-ribulose 1,5-bisphosphate, the primary event in carbon dioxide fixation, as well as the oxidative fragmentation of the pentose substrate. Both reactions occur simultaneously and in competition at the same active site. Although the small subunit is not catalytic it is essential for maximal activity. The sequence is that of Ribulose bisphosphate carboxylase small subunit, chloroplastic from Euglena gracilis.